A 379-amino-acid polypeptide reads, in one-letter code: Queuine tRNA-ribosyltransferase (379 aa).

Residue aspartate 94 is the Proton acceptor of the active site. Substrate-binding positions include 94-98 (DSGGF), aspartate 148, glutamine 191, and glycine 218. The segment at 249-255 (GVGSPDS) is RNA binding. Catalysis depends on aspartate 268, which acts as the Nucleophile. Residues 273-277 (TRIAR) are RNA binding; important for wobble base 34 recognition. Residues cysteine 306, cysteine 308, cysteine 311, and histidine 337 each contribute to the Zn(2+) site.

It belongs to the queuine tRNA-ribosyltransferase family. As to quaternary structure, homodimer. Within each dimer, one monomer is responsible for RNA recognition and catalysis, while the other monomer binds to the replacement base PreQ1. It depends on Zn(2+) as a cofactor.

It carries out the reaction 7-aminomethyl-7-carbaguanine + guanosine(34) in tRNA = 7-aminomethyl-7-carbaguanosine(34) in tRNA + guanine. The protein operates within tRNA modification; tRNA-queuosine biosynthesis. Functionally, catalyzes the base-exchange of a guanine (G) residue with the queuine precursor 7-aminomethyl-7-deazaguanine (PreQ1) at position 34 (anticodon wobble position) in tRNAs with GU(N) anticodons (tRNA-Asp, -Asn, -His and -Tyr). Catalysis occurs through a double-displacement mechanism. The nucleophile active site attacks the C1' of nucleotide 34 to detach the guanine base from the RNA, forming a covalent enzyme-RNA intermediate. The proton acceptor active site deprotonates the incoming PreQ1, allowing a nucleophilic attack on the C1' of the ribose to form the product. After dissociation, two additional enzymatic reactions on the tRNA convert PreQ1 to queuine (Q), resulting in the hypermodified nucleoside queuosine (7-(((4,5-cis-dihydroxy-2-cyclopenten-1-yl)amino)methyl)-7-deazaguanosine). This chain is Queuine tRNA-ribosyltransferase, found in Bacillus cereus (strain Q1).